A 24-amino-acid chain; its full sequence is AVLDTALSGIDKVLHGSIDAHKAD.

This Liposcelis bostrychophila (Booklouse) protein is Allergen Lip b 1.